The following is a 1816-amino-acid chain: Nuclear pore complex protein Nup98-Nup96 (1816 aa).

The tract at residues 1–156 (MFNKSFGTPF…LFGPSSFTAA (156 aa)) is FG repeats 1. Residues 157–213 (PTGTTIKFNPPTGTDTMVKAGVSTNISTKHQCITAMKEYESKSLEELRLEDYQANRK) are GLEBS; interaction with RAE1. The interval 214–480 (GPQNQVGAGT…NTSTAILGFG (267 aa)) is FG repeats 2. A disordered region spans residues 512 to 535 (PFGDSPLFRNPMSDPKKKEERLKP). The residue at position 524 (S524) is a Phosphoserine. Residues 525–534 (DPKKKEERLK) are compositionally biased toward basic and acidic residues. Residue K563 forms a Glycyl lysine isopeptide (Lys-Gly) (interchain with G-Cter in SUMO2) linkage. N6-acetyllysine; alternate is present on K603. K603 is covalently cross-linked (Glycyl lysine isopeptide (Lys-Gly) (interchain with G-Cter in SUMO2); alternate). A phosphoserine mark is found at S608, S612, S618, S623, S625, and S653. The interval 663–682 (IAKPIPQTPESAGNKNNSSS) is disordered. K665 participates in a covalent cross-link: Glycyl lysine isopeptide (Lys-Gly) (interchain with G-Cter in SUMO2). T670 is modified (phosphothreonine). Residues 670-682 (TPESAGNKNNSSS) show a composition bias toward polar residues. Phosphoserine is present on residues S673, S680, S681, and S839. In terms of domain architecture, Peptidase S59 spans 738–880 (KVGYYTIPSM…GSWVFKVSHF (143 aa)). Catalysis depends on S881, which acts as the Nucleophile. The interval 886 to 937 (QDSDEEEEEHPPKTTSKKLKTAPLPPAGQATTFQMTLNGKPAPPPQSQSPEV) is disordered. Phosphoserine occurs at positions 888, 934, 1027, 1042, 1059, and 1063. Residue T1069 is modified to Phosphothreonine. S1328 bears the Phosphoserine mark. Position 1771 is a phosphothreonine (T1771).

The protein belongs to the nucleoporin GLFG family. In terms of assembly, part of the nuclear pore complex (NPC). Interacts directly with NUP96. Part of the Nup160 subcomplex in the nuclear pore which is composed of NUP160, NUP133, NUP107 and NUP96; this complex plays a role in RNA export and in tethering NUP98 and NUP153 to the nucleus. Interacts with RAE1. Does not interact with TPR. Interacts directly with NUP88 and NUP214, subunits of the cytoplasmic filaments of the NPC. Interacts (via N-terminus) with DHX9 (via DRBM, OB-fold and RGG domains); this interaction occurs in a RNA-dependent manner and stimulates DHX9-mediated ATPase activity. The N-terminus is blocked. In terms of processing, isoform 1 is autoproteolytically cleaved to yield Nup98 and Nup96 or Nup98 only, respectively. Cleaved Nup98 is necessary for the targeting of Nup98 to the nuclear pore and the interaction with Nup96.

The protein resides in the nucleus membrane. The protein localises to the nucleus. Its subcellular location is the nuclear pore complex. It localises to the nucleoplasm. Its function is as follows. Plays a role in the nuclear pore complex (NPC) assembly and/or maintenance. Involved in the bidirectional transport across the NPC. May anchor NUP153 and TPR to the NPC. In terms of biological role, plays a role in the nuclear pore complex (NPC) assembly and/or maintenance. NUP98 and NUP96 are involved in the bidirectional transport across the NPC. May anchor NUP153 and TPR to the NPC. In cooperation with DHX9, plays a role in transcription and alternative splicing activation of a subset of genes. Involved in the localization of DHX9 in discrete intranuclear foci (GLFG-body). The sequence is that of Nuclear pore complex protein Nup98-Nup96 (Nup98) from Rattus norvegicus (Rat).